A 209-amino-acid chain; its full sequence is U1 small nuclear ribonucleoprotein C (209 aa).

A Matrin-type zinc finger spans residues 4 to 36 (HYCDYCDVFLTHDSASVRKAHNSGRNHLANVRD). The span at 72–87 (PQHLQAPPQGGFAPPM) shows a compositional bias: low complexity. The disordered stretch occupies residues 72-209 (PQHLQAPPQG…RARMMGPGGR (138 aa)). Pro residues-rich tracts occupy residues 93–150 (GGFP…PFPP) and 159–191 (PGAPSFPPPPGGFNGPPPPSGQNSQGPPPPTNP).

It belongs to the U1 small nuclear ribonucleoprotein C family. In terms of assembly, U1 snRNP is composed of the 7 core Sm proteins B/B', D1, D2, D3, E, F and G that assemble in a heptameric protein ring on the Sm site of the small nuclear RNA to form the core snRNP, and at least 3 U1 snRNP-specific proteins U1-70K, U1-A and U1-C. U1-C interacts with U1 snRNA and the 5' splice-site region of the pre-mRNA.

Its subcellular location is the nucleus. In terms of biological role, component of the spliceosomal U1 snRNP, which is essential for recognition of the pre-mRNA 5' splice-site and the subsequent assembly of the spliceosome. U1-C is directly involved in initial 5' splice-site recognition for both constitutive and regulated alternative splicing. The interaction with the 5' splice-site seems to precede base-pairing between the pre-mRNA and the U1 snRNA. Stimulates commitment or early (E) complex formation by stabilizing the base pairing of the 5' end of the U1 snRNA and the 5' splice-site region. The sequence is that of U1 small nuclear ribonucleoprotein C from Coprinopsis cinerea (strain Okayama-7 / 130 / ATCC MYA-4618 / FGSC 9003) (Inky cap fungus).